A 429-amino-acid polypeptide reads, in one-letter code: Citrate synthase (429 aa).

Residues His306 and Asp364 contribute to the active site.

Belongs to the citrate synthase family.

It catalyses the reaction oxaloacetate + acetyl-CoA + H2O = citrate + CoA + H(+). It participates in carbohydrate metabolism; tricarboxylic acid cycle; isocitrate from oxaloacetate: step 1/2. The chain is Citrate synthase (gltA) from Rhizobium meliloti (strain 1021) (Ensifer meliloti).